Consider the following 248-residue polypeptide: MAPGAPSSSPSPILAALLFSSLVLSPALAIVVYTDREIYGAVGSQVTLHCSFWSSEWVSDDISFTWRYQPEGGRDAISIFHYAKGQPYIDEVGAFKERIQWVGDPRWKDGSIVIHNLDYSDNGTFTCDVKNPPDIVGKTSQVTLYVFEKVPTRYGVVLGAVIGGILGVVLLLLLLFYLIRYCWLRRQAALQRRLSAMEKGRFHKSSKDSSKRGRQTPVLYAMLDHSRSTKAASEKKSKGLGESRKDKK.

An N-terminal signal peptide occupies residues 1–29 (MAPGAPSSSPSPILAALLFSSLVLSPALA). The Ig-like V-type domain maps to 30–143 (IVVYTDREIY…DIVGKTSQVT (114 aa)). Over 30 to 153 (IVVYTDREIY…LYVFEKVPTR (124 aa)) the chain is Extracellular. A disulfide bridge connects residues Cys-50 and Cys-127. The N-linked (GlcNAc...) (complex) asparagine glycan is linked to Asn-122. Residues 154 to 179 (YGVVLGAVIGGILGVVLLLLLLFYLI) form a helical membrane-spanning segment. The Cytoplasmic segment spans residues 180-248 (RYCWLRRQAA…GLGESRKDKK (69 aa)). Ser-210 is modified (phosphoserine; by PKC). The tract at residues 222-248 (MLDHSRSTKAASEKKSKGLGESRKDKK) is disordered. Over residues 224–248 (DHSRSTKAASEKKSKGLGESRKDKK) the composition is skewed to basic and acidic residues. Residues Ser-226 and Ser-228 each carry the phosphoserine modification. Ser-233 carries the post-translational modification Phosphoserine; by PKC. A phosphoserine mark is found at Ser-237 and Ser-243.

It belongs to the myelin P0 protein family. Homodimer and homotetramer. Post-translationally, N-glycosylated; contains sulfate-substituted glycan. Found only in peripheral nervous system Schwann cells.

Its subcellular location is the cell membrane. Is an adhesion molecule necessary for normal myelination in the peripheral nervous system. It mediates adhesion between adjacent myelin wraps and ultimately drives myelin compaction. This is Myelin protein P0 (Mpz) from Mus musculus (Mouse).